Here is a 166-residue protein sequence, read N- to C-terminus: 6,7-dimethyl-8-ribityllumazine synthase (166 aa).

Residues Phe22, 56–58 (SME), and 80–82 (AVI) each bind 5-amino-6-(D-ribitylamino)uracil. 85–86 (ET) lines the (2S)-2-hydroxy-3-oxobutyl phosphate pocket. His88 acts as the Proton donor in catalysis. Residue Phe113 coordinates 5-amino-6-(D-ribitylamino)uracil. Arg127 serves as a coordination point for (2S)-2-hydroxy-3-oxobutyl phosphate.

The protein belongs to the DMRL synthase family.

The catalysed reaction is (2S)-2-hydroxy-3-oxobutyl phosphate + 5-amino-6-(D-ribitylamino)uracil = 6,7-dimethyl-8-(1-D-ribityl)lumazine + phosphate + 2 H2O + H(+). The protein operates within cofactor biosynthesis; riboflavin biosynthesis; riboflavin from 2-hydroxy-3-oxobutyl phosphate and 5-amino-6-(D-ribitylamino)uracil: step 1/2. Catalyzes the formation of 6,7-dimethyl-8-ribityllumazine by condensation of 5-amino-6-(D-ribitylamino)uracil with 3,4-dihydroxy-2-butanone 4-phosphate. This is the penultimate step in the biosynthesis of riboflavin. The chain is 6,7-dimethyl-8-ribityllumazine synthase from Thermotoga neapolitana (strain ATCC 49049 / DSM 4359 / NBRC 107923 / NS-E).